A 763-amino-acid chain; its full sequence is Phosphoglycerol transferase I (763 aa).

The next 4 membrane-spanning stretches (helical) occupy residues 1-21 (MSELLSFALFLASVLIYAWKA), 26-46 (WWFAATLTVLGLFVVLNITLF), 77-97 (ILPGIGIVLGLTAVFGALGWI), and 108-128 (FGYSLLALLLALGSVDASPAF).

The protein belongs to the OpgB family.

Its subcellular location is the cell inner membrane. It catalyses the reaction a phosphatidylglycerol + a membrane-derived-oligosaccharide D-glucose = a 1,2-diacyl-sn-glycerol + a membrane-derived-oligosaccharide 6-(glycerophospho)-D-glucose.. It functions in the pathway glycan metabolism; osmoregulated periplasmic glucan (OPG) biosynthesis. Its function is as follows. Transfers a phosphoglycerol residue from phosphatidylglycerol to the membrane-bound nascent glucan backbones. The protein is Phosphoglycerol transferase I of Escherichia coli (strain SE11).